Here is a 501-residue protein sequence, read N- to C-terminus: Cytochrome P450 7A1 (501 aa).

A helical membrane pass occupies residues 4 to 24; it reads ISLLGGIVTAVCCCLWLLLGM. Cys441 contacts heme.

Belongs to the cytochrome P450 family. It depends on heme as a cofactor.

The protein resides in the endoplasmic reticulum membrane. It is found in the microsome membrane. The enzyme catalyses cholesterol + reduced [NADPH--hemoprotein reductase] + O2 = 7alpha-hydroxycholesterol + oxidized [NADPH--hemoprotein reductase] + H2O + H(+). It carries out the reaction 4beta-hydroxycholesterol + reduced [NADPH--hemoprotein reductase] + O2 = 4beta,7alpha-dihydroxycholesterol + oxidized [NADPH--hemoprotein reductase] + H2O + H(+). The catalysed reaction is lathosterol + reduced [NADPH--hemoprotein reductase] + O2 = 7alpha,8alpha-epoxy-5alpha-cholestan-3beta-ol + oxidized [NADPH--hemoprotein reductase] + H2O + H(+). It catalyses the reaction lathosterol + reduced [NADPH--hemoprotein reductase] + O2 = 5alpha-cholestan-7-oxo-3beta-ol + oxidized [NADPH--hemoprotein reductase] + H2O + H(+). The enzyme catalyses 7-dehydrocholesterol + reduced [NADPH--hemoprotein reductase] + O2 = 7-oxocholesterol + oxidized [NADPH--hemoprotein reductase] + H2O + H(+). It carries out the reaction (24S)-hydroxycholesterol + reduced [NADPH--hemoprotein reductase] + O2 = (24S)-7alpha-dihydroxycholesterol + oxidized [NADPH--hemoprotein reductase] + H2O + H(+). The catalysed reaction is (24R)-hydroxycholesterol + reduced [NADPH--hemoprotein reductase] + O2 = (24R)-7alpha-dihydroxycholesterol + oxidized [NADPH--hemoprotein reductase] + H2O + H(+). It functions in the pathway lipid metabolism; bile acid biosynthesis. It participates in steroid metabolism; cholesterol degradation. A cytochrome P450 monooxygenase involved in the metabolism of endogenous cholesterol and its oxygenated derivatives (oxysterols). Mechanistically, uses molecular oxygen inserting one oxygen atom into a substrate, and reducing the second into a water molecule, with two electrons provided by NADPH via cytochrome P450 reductase (CPR; NADPH-ferrihemoprotein reductase). Functions as a critical regulatory enzyme of bile acid biosynthesis and cholesterol homeostasis. Catalyzes the hydroxylation of carbon hydrogen bond at 7-alpha position of cholesterol, a rate-limiting step in cholesterol catabolism and bile acid biosynthesis. 7-alpha hydroxylates several oxysterols, including 4beta-hydroxycholesterol and 24-hydroxycholesterol. Catalyzes the oxidation of the 7,8 double bond of 7-dehydrocholesterol and lathosterol with direct and predominant formation of the 7-keto derivatives. This chain is Cytochrome P450 7A1 (CYP7A1), found in Sus scrofa (Pig).